The sequence spans 949 residues: Glycine dehydrogenase (decarboxylating) (949 aa).

At K699 the chain carries N6-(pyridoxal phosphate)lysine.

It belongs to the GcvP family. The glycine cleavage system is composed of four proteins: P, T, L and H. Pyridoxal 5'-phosphate serves as cofactor.

It carries out the reaction N(6)-[(R)-lipoyl]-L-lysyl-[glycine-cleavage complex H protein] + glycine + H(+) = N(6)-[(R)-S(8)-aminomethyldihydrolipoyl]-L-lysyl-[glycine-cleavage complex H protein] + CO2. In terms of biological role, the glycine cleavage system catalyzes the degradation of glycine. The P protein binds the alpha-amino group of glycine through its pyridoxal phosphate cofactor; CO(2) is released and the remaining methylamine moiety is then transferred to the lipoamide cofactor of the H protein. This Roseobacter denitrificans (strain ATCC 33942 / OCh 114) (Erythrobacter sp. (strain OCh 114)) protein is Glycine dehydrogenase (decarboxylating).